A 289-amino-acid chain; its full sequence is Probable ABC transporter permease protein BruAb2_0483 (289 aa).

6 helical membrane-spanning segments follow: residues 9-29 (FLILPSLLLAAVVIFWPVVHL), 70-90 (VWTVAVVGGALVLSIPVAIIL), 99-119 (VARVIIMLPWAVSLTMTAIFW), 144-166 (IQWLASAATAFPMQILVGILVTV), 213-233 (IAIVLNTIYVFNSFPIIWVMT), and 258-278 (FGEASAVSLIMLAILLVFTVI). The region spanning 65–279 (LWRTAVWTVA…AILLVFTVIY (215 aa)) is the ABC transmembrane type-1 domain.

Belongs to the binding-protein-dependent transport system permease family. In terms of assembly, the complex is composed of two ATP-binding proteins (BruAb2_0487), two transmembrane proteins (BruAb2_0483) and a solute-binding protein (BruAb2_0484).

The protein localises to the cell inner membrane. Its function is as follows. Probably part of an ABC transporter complex. Probably responsible for the translocation of the substrate across the membrane. In Brucella abortus biovar 1 (strain 9-941), this protein is Probable ABC transporter permease protein BruAb2_0483.